A 104-amino-acid polypeptide reads, in one-letter code: Large ribosomal subunit protein uL24 (104 aa).

The protein belongs to the universal ribosomal protein uL24 family. Part of the 50S ribosomal subunit.

In terms of biological role, one of two assembly initiator proteins, it binds directly to the 5'-end of the 23S rRNA, where it nucleates assembly of the 50S subunit. Its function is as follows. One of the proteins that surrounds the polypeptide exit tunnel on the outside of the subunit. The protein is Large ribosomal subunit protein uL24 of Alteromonas mediterranea (strain DSM 17117 / CIP 110805 / LMG 28347 / Deep ecotype).